A 490-amino-acid chain; its full sequence is MLDFEQLSPAIPLQSVLCVGDLMLDEFVYGEVSRISPEAPAPVIAAQRSEIDVGGAGNVARNIASLGARCVFIGLVGDDDAGRTLQTTLAKDALITPVLVCDPSRPTTRKVRFVSEHFSTHMLRADWEVAAPASAAVEQQLIDAVLKQLPAADIVLLSDYAKGVLTARLIRETIDAAKKLGKRVIVDPKSPNFALYRGATLLTPNRKEFCEATRSRADSAAEIATAAREAMDVADCEALLVTQSERGMTLVVREGEAIHVPAHPVKVRDVSGAGDTVAAVLAVMLAAGADWDIALRAANAGAAVAVSKKGTASVSLAELRRKILPHAFLAAEEKIVAAGGDLAPHLAEWRAEGFRIGFTNGCFDILHPGHVKVLTAARAACDRLIVGLNSDASVRRLKGETRPVQDERARAEVLAALEAVDLVAIFDEDTPLRLITEIKPSVLVKGGDYTREQVVGHEVVAANGGEVLLIDILPGHSTTSLVARAQNGKS.

A ribokinase region spans residues 1–330; that stretch reads MLDFEQLSPA…RKILPHAFLA (330 aa). Position 205–208 (205–208) interacts with ATP; it reads NRKE. Residue D275 is part of the active site. The cytidylyltransferase stretch occupies residues 358 to 490; the sequence is FTNGCFDILH…LVARAQNGKS (133 aa).

It in the N-terminal section; belongs to the carbohydrate kinase PfkB family. This sequence in the C-terminal section; belongs to the cytidylyltransferase family. As to quaternary structure, homodimer.

The catalysed reaction is D-glycero-beta-D-manno-heptose 7-phosphate + ATP = D-glycero-beta-D-manno-heptose 1,7-bisphosphate + ADP + H(+). The enzyme catalyses D-glycero-beta-D-manno-heptose 1-phosphate + ATP + H(+) = ADP-D-glycero-beta-D-manno-heptose + diphosphate. Its pathway is nucleotide-sugar biosynthesis; ADP-L-glycero-beta-D-manno-heptose biosynthesis; ADP-L-glycero-beta-D-manno-heptose from D-glycero-beta-D-manno-heptose 7-phosphate: step 1/4. It participates in nucleotide-sugar biosynthesis; ADP-L-glycero-beta-D-manno-heptose biosynthesis; ADP-L-glycero-beta-D-manno-heptose from D-glycero-beta-D-manno-heptose 7-phosphate: step 3/4. Catalyzes the phosphorylation of D-glycero-D-manno-heptose 7-phosphate at the C-1 position to selectively form D-glycero-beta-D-manno-heptose-1,7-bisphosphate. Its function is as follows. Catalyzes the ADP transfer from ATP to D-glycero-beta-D-manno-heptose 1-phosphate, yielding ADP-D-glycero-beta-D-manno-heptose. This Rhodopseudomonas palustris (strain BisA53) protein is Bifunctional protein HldE.